The chain runs to 161 residues: ATP synthase subunit b 1 (161 aa).

The helical transmembrane segment at 6–26 threads the bilayer; it reads ETWVAIAFVILMVVFGYLGVF.

The protein belongs to the ATPase B chain family. As to quaternary structure, F-type ATPases have 2 components, F(1) - the catalytic core - and F(0) - the membrane proton channel. F(1) has five subunits: alpha(3), beta(3), gamma(1), delta(1), epsilon(1). F(0) has three main subunits: a(1), b(2) and c(10-14). The alpha and beta chains form an alternating ring which encloses part of the gamma chain. F(1) is attached to F(0) by a central stalk formed by the gamma and epsilon chains, while a peripheral stalk is formed by the delta and b chains.

The protein resides in the cell inner membrane. F(1)F(0) ATP synthase produces ATP from ADP in the presence of a proton or sodium gradient. F-type ATPases consist of two structural domains, F(1) containing the extramembraneous catalytic core and F(0) containing the membrane proton channel, linked together by a central stalk and a peripheral stalk. During catalysis, ATP synthesis in the catalytic domain of F(1) is coupled via a rotary mechanism of the central stalk subunits to proton translocation. Its function is as follows. Component of the F(0) channel, it forms part of the peripheral stalk, linking F(1) to F(0). The protein is ATP synthase subunit b 1 of Bradyrhizobium diazoefficiens (strain JCM 10833 / BCRC 13528 / IAM 13628 / NBRC 14792 / USDA 110).